We begin with the raw amino-acid sequence, 466 residues long: 3-isopropylmalate dehydratase large subunit (466 aa).

[4Fe-4S] cluster contacts are provided by Cys347, Cys407, and Cys410.

It belongs to the aconitase/IPM isomerase family. LeuC type 1 subfamily. Heterodimer of LeuC and LeuD. [4Fe-4S] cluster is required as a cofactor.

The catalysed reaction is (2R,3S)-3-isopropylmalate = (2S)-2-isopropylmalate. The protein operates within amino-acid biosynthesis; L-leucine biosynthesis; L-leucine from 3-methyl-2-oxobutanoate: step 2/4. Catalyzes the isomerization between 2-isopropylmalate and 3-isopropylmalate, via the formation of 2-isopropylmaleate. In Acidiphilium cryptum (strain JF-5), this protein is 3-isopropylmalate dehydratase large subunit.